Consider the following 647-residue polypeptide: DNA mismatch repair protein MutL (647 aa).

Positions 375–395 (KQEEPQAVKQPPQLWQPPKQE) are disordered. Residues 383 to 395 (KQPPQLWQPPKQE) show a composition bias toward low complexity.

Belongs to the DNA mismatch repair MutL/HexB family.

Its function is as follows. This protein is involved in the repair of mismatches in DNA. It is required for dam-dependent methyl-directed DNA mismatch repair. May act as a 'molecular matchmaker', a protein that promotes the formation of a stable complex between two or more DNA-binding proteins in an ATP-dependent manner without itself being part of a final effector complex. The sequence is that of DNA mismatch repair protein MutL from Bacillus cereus (strain B4264).